The chain runs to 346 residues: Large ribosomal subunit protein uL3 (346 aa).

A disordered region spans residues 324–346 (KPPKKKPPVERPQITYVSRESKQ).

The protein belongs to the universal ribosomal protein uL3 family. As to quaternary structure, part of the 50S ribosomal subunit. Forms a cluster with proteins L14 and L24e.

Functionally, one of the primary rRNA binding proteins, it binds directly near the 3'-end of the 23S rRNA, where it nucleates assembly of the 50S subunit. This Thermococcus gammatolerans (strain DSM 15229 / JCM 11827 / EJ3) protein is Large ribosomal subunit protein uL3.